A 227-amino-acid polypeptide reads, in one-letter code: Phosphoribosylformylglycinamidine synthase subunit PurQ (227 aa).

The Glutamine amidotransferase type-1 domain maps to 3–225; the sequence is FAVIVFPGSN…LKQWRETYVV (223 aa). Cys-86 functions as the Nucleophile in the catalytic mechanism. Active-site residues include His-194 and Glu-196.

As to quaternary structure, part of the FGAM synthase complex composed of 1 PurL, 1 PurQ and 2 PurS subunits.

Its subcellular location is the cytoplasm. The enzyme catalyses N(2)-formyl-N(1)-(5-phospho-beta-D-ribosyl)glycinamide + L-glutamine + ATP + H2O = 2-formamido-N(1)-(5-O-phospho-beta-D-ribosyl)acetamidine + L-glutamate + ADP + phosphate + H(+). It catalyses the reaction L-glutamine + H2O = L-glutamate + NH4(+). It participates in purine metabolism; IMP biosynthesis via de novo pathway; 5-amino-1-(5-phospho-D-ribosyl)imidazole from N(2)-formyl-N(1)-(5-phospho-D-ribosyl)glycinamide: step 1/2. Functionally, part of the phosphoribosylformylglycinamidine synthase complex involved in the purines biosynthetic pathway. Catalyzes the ATP-dependent conversion of formylglycinamide ribonucleotide (FGAR) and glutamine to yield formylglycinamidine ribonucleotide (FGAM) and glutamate. The FGAM synthase complex is composed of three subunits. PurQ produces an ammonia molecule by converting glutamine to glutamate. PurL transfers the ammonia molecule to FGAR to form FGAM in an ATP-dependent manner. PurS interacts with PurQ and PurL and is thought to assist in the transfer of the ammonia molecule from PurQ to PurL. In Bacillus mycoides (strain KBAB4) (Bacillus weihenstephanensis), this protein is Phosphoribosylformylglycinamidine synthase subunit PurQ.